Here is a 103-residue protein sequence, read N- to C-terminus: Putative defensin-like protein 305 (103 aa).

Residues 1-31 (MREEILEIFLLVNFVFILCTSIMVRIRYVSC) form the signal peptide. Intrachain disulfides connect cysteine 31–cysteine 51, cysteine 37–cysteine 56, and cysteine 42–cysteine 58.

Belongs to the DEFL family.

The protein resides in the secreted. The protein is Putative defensin-like protein 305 of Arabidopsis thaliana (Mouse-ear cress).